Here is a 502-residue protein sequence, read N- to C-terminus: Probable cytosol aminopeptidase (502 aa).

The Mn(2+) site is built by Lys-269 and Asp-274. Lys-281 is an active-site residue. Residues Asp-292, Asp-351, and Glu-353 each coordinate Mn(2+). The active site involves Arg-355.

The protein belongs to the peptidase M17 family. It depends on Mn(2+) as a cofactor.

It localises to the cytoplasm. It catalyses the reaction Release of an N-terminal amino acid, Xaa-|-Yaa-, in which Xaa is preferably Leu, but may be other amino acids including Pro although not Arg or Lys, and Yaa may be Pro. Amino acid amides and methyl esters are also readily hydrolyzed, but rates on arylamides are exceedingly low.. It carries out the reaction Release of an N-terminal amino acid, preferentially leucine, but not glutamic or aspartic acids.. In terms of biological role, presumably involved in the processing and regular turnover of intracellular proteins. Catalyzes the removal of unsubstituted N-terminal amino acids from various peptides. This Photobacterium profundum (strain SS9) protein is Probable cytosol aminopeptidase.